A 273-amino-acid chain; its full sequence is 3-methyl-2-oxobutanoate hydroxymethyltransferase (273 aa).

Residues Asp-53 and Asp-92 each coordinate Mg(2+). Residues 53-54, Asp-92, and Lys-122 contribute to the 3-methyl-2-oxobutanoate site; that span reads DS. Glu-124 provides a ligand contact to Mg(2+). The Proton acceptor role is filled by Glu-191.

Belongs to the PanB family. In terms of assembly, homodecamer; pentamer of dimers. It depends on Mg(2+) as a cofactor.

It localises to the cytoplasm. The enzyme catalyses 3-methyl-2-oxobutanoate + (6R)-5,10-methylene-5,6,7,8-tetrahydrofolate + H2O = 2-dehydropantoate + (6S)-5,6,7,8-tetrahydrofolate. It functions in the pathway cofactor biosynthesis; (R)-pantothenate biosynthesis; (R)-pantoate from 3-methyl-2-oxobutanoate: step 1/2. In terms of biological role, catalyzes the reversible reaction in which hydroxymethyl group from 5,10-methylenetetrahydrofolate is transferred onto alpha-ketoisovalerate to form ketopantoate. This Porphyromonas gingivalis (strain ATCC 33277 / DSM 20709 / CIP 103683 / JCM 12257 / NCTC 11834 / 2561) protein is 3-methyl-2-oxobutanoate hydroxymethyltransferase.